Here is a 439-residue protein sequence, read N- to C-terminus: O-methyltransferase aurJ (439 aa).

Asp283 contributes to the S-adenosyl-L-methionine binding site. His338 functions as the Proton acceptor in the catalytic mechanism.

The protein belongs to the class I-like SAM-binding methyltransferase superfamily. Cation-independent O-methyltransferase family. COMT subfamily.

It catalyses the reaction norrubrofusarin + S-adenosyl-L-methionine = rubrofusarin + S-adenosyl-L-homocysteine + H(+). It participates in pigment biosynthesis. In terms of biological role, O-methyltransferase; part of the gene cluster that mediates the biosynthesis of aurofusarin, a red mycelium pigment which is acting as a mycotoxin. The first step is performed by the polyketide synthase which condenses one acetyl-CoA and 6 malonyl-CoA units to form the first intermediate, the cyclic heptaketide and yellow pigment YWA1. The C2 hydroxyl group in the pyrone ring of YWA1 is probably formed during ring closure by an aldol-type cyclization reaction. The dehydratase aurZ then acts as the first tailoring enzyme in the aurofusarin biosynthetic pathway by converting YWA1 to nor-rubrofusarin. Nor-rubrofusarin is then methylated to rubrofusarin by the O-methyltransferase aurJ. Rubrofusarin is then transported across the plasma membrane by the rubrofusarin-specific pump aurT for further enzymatic processing by the extracellular complex composed of GIP1, aurF, aurO and aurS to yield aurofusarin. This chain is O-methyltransferase aurJ, found in Gibberella zeae (strain ATCC MYA-4620 / CBS 123657 / FGSC 9075 / NRRL 31084 / PH-1) (Wheat head blight fungus).